The following is a 458-amino-acid chain: UDP-N-acetylmuramate--L-alanine ligase (458 aa).

118–124 contacts ATP; it reads GTHGKTT.

The protein belongs to the MurCDEF family.

It is found in the cytoplasm. It carries out the reaction UDP-N-acetyl-alpha-D-muramate + L-alanine + ATP = UDP-N-acetyl-alpha-D-muramoyl-L-alanine + ADP + phosphate + H(+). Its pathway is cell wall biogenesis; peptidoglycan biosynthesis. In terms of biological role, cell wall formation. In Clostridium acetobutylicum (strain ATCC 824 / DSM 792 / JCM 1419 / IAM 19013 / LMG 5710 / NBRC 13948 / NRRL B-527 / VKM B-1787 / 2291 / W), this protein is UDP-N-acetylmuramate--L-alanine ligase.